The sequence spans 577 residues: Proline--tRNA ligase (577 aa).

Belongs to the class-II aminoacyl-tRNA synthetase family. ProS type 1 subfamily. Homodimer.

The protein localises to the cytoplasm. The enzyme catalyses tRNA(Pro) + L-proline + ATP = L-prolyl-tRNA(Pro) + AMP + diphosphate. In terms of biological role, catalyzes the attachment of proline to tRNA(Pro) in a two-step reaction: proline is first activated by ATP to form Pro-AMP and then transferred to the acceptor end of tRNA(Pro). As ProRS can inadvertently accommodate and process non-cognate amino acids such as alanine and cysteine, to avoid such errors it has two additional distinct editing activities against alanine. One activity is designated as 'pretransfer' editing and involves the tRNA(Pro)-independent hydrolysis of activated Ala-AMP. The other activity is designated 'posttransfer' editing and involves deacylation of mischarged Ala-tRNA(Pro). The misacylated Cys-tRNA(Pro) is not edited by ProRS. This is Proline--tRNA ligase from Herminiimonas arsenicoxydans.